The following is an 83-amino-acid chain: Exodeoxyribonuclease 7 small subunit (83 aa).

Belongs to the XseB family. As to quaternary structure, heterooligomer composed of large and small subunits.

It is found in the cytoplasm. It carries out the reaction Exonucleolytic cleavage in either 5'- to 3'- or 3'- to 5'-direction to yield nucleoside 5'-phosphates.. In terms of biological role, bidirectionally degrades single-stranded DNA into large acid-insoluble oligonucleotides, which are then degraded further into small acid-soluble oligonucleotides. The protein is Exodeoxyribonuclease 7 small subunit of Heliobacterium modesticaldum (strain ATCC 51547 / Ice1).